The sequence spans 100 residues: Urease subunit gamma (100 aa).

This sequence belongs to the urease gamma subunit family. Heterotrimer of UreA (gamma), UreB (beta) and UreC (alpha) subunits. Three heterotrimers associate to form the active enzyme.

The protein resides in the cytoplasm. It carries out the reaction urea + 2 H2O + H(+) = hydrogencarbonate + 2 NH4(+). The protein operates within nitrogen metabolism; urea degradation; CO(2) and NH(3) from urea (urease route): step 1/1. In Trichormus variabilis (strain ATCC 29413 / PCC 7937) (Anabaena variabilis), this protein is Urease subunit gamma.